We begin with the raw amino-acid sequence, 476 residues long: Dermokine (476 aa).

Residues 1–21 form the signal peptide; sequence MKFQGPLACLLLALCLGSGEA. Composition is skewed to gly residues over residues 153-169, 193-202, 236-259, and 268-298; these read SQGG…GGLG, WGQGGNGGPP, GSGG…GSGS, and SSGG…GSRG. The segment at 153 to 351 is disordered; the sequence is SQGGLGGQGQ…ESGIQNSETS (199 aa). The span at 299 to 315 shows a compositional bias: low complexity; the sequence is DSGSESSWGSSTGSSSG. The span at 316–326 shows a compositional bias: gly residues; sequence NHGGSGGGNGH.

Belongs to the dermokine family. In terms of assembly, homooligomer. Seems to be able to homodimerize and homotrimerize. O-glycosylated. In terms of tissue distribution, expressed in epidermis; in the spinous and granular layers and in placenta. Also found in the epithelia of the small intestine, macrophages of the lung and endothelial cells of the lung. Isoform 15 is expressed in epidermis and placenta. Isoform 1 is expressed in epidermis.

The protein resides in the secreted. In terms of biological role, may act as a soluble regulator of keratinocyte differentiation. In Homo sapiens (Human), this protein is Dermokine (DMKN).